The sequence spans 92 residues: Large ribosomal subunit protein eL37 (92 aa).

Zn(2+)-binding residues include Cys-19, Cys-22, Cys-34, and Cys-37. The C4-type zinc-finger motif lies at 19–37 (CRRCGRSSYHIQKSKCAQC).

The protein belongs to the eukaryotic ribosomal protein eL37 family. The cofactor is Zn(2+).

Functionally, binds to the 23S rRNA. In Spodoptera frugiperda (Fall armyworm), this protein is Large ribosomal subunit protein eL37 (RpL37).